The following is a 335-amino-acid chain: tRNA N6-adenosine threonylcarbamoyltransferase (335 aa).

Fe cation is bound by residues H111 and H115. Substrate-binding positions include 134 to 138 (LISGG), D167, G180, and N270. D298 serves as a coordination point for Fe cation.

This sequence belongs to the KAE1 / TsaD family. Fe(2+) is required as a cofactor.

Its subcellular location is the cytoplasm. The enzyme catalyses L-threonylcarbamoyladenylate + adenosine(37) in tRNA = N(6)-L-threonylcarbamoyladenosine(37) in tRNA + AMP + H(+). Required for the formation of a threonylcarbamoyl group on adenosine at position 37 (t(6)A37) in tRNAs that read codons beginning with adenine. Is involved in the transfer of the threonylcarbamoyl moiety of threonylcarbamoyl-AMP (TC-AMP) to the N6 group of A37, together with TsaE and TsaB. TsaD likely plays a direct catalytic role in this reaction. This Nitrosococcus oceani (strain ATCC 19707 / BCRC 17464 / JCM 30415 / NCIMB 11848 / C-107) protein is tRNA N6-adenosine threonylcarbamoyltransferase.